The sequence spans 472 residues: DNA-cytosine methyltransferase (472 aa).

An SAM-dependent MTase C5-type domain is found at 87 to 457 (FRFIDLFAGI…KLLEPKIKQA (371 aa)). Cys177 is a catalytic residue.

This sequence belongs to the class I-like SAM-binding methyltransferase superfamily. C5-methyltransferase family.

The enzyme catalyses a 2'-deoxycytidine in DNA + S-adenosyl-L-methionine = a 5-methyl-2'-deoxycytidine in DNA + S-adenosyl-L-homocysteine + H(+). Functionally, this methylase recognizes the double-stranded sequence 5'-CCWGG-3', methylates C-2 on both strands. In Escherichia coli O157:H7, this protein is DNA-cytosine methyltransferase (dcm).